Here is a 394-residue protein sequence, read N- to C-terminus: Elongation factor Tu (394 aa).

Positions 10–204 (KPHINIGTIG…AVDDNIPTPE (195 aa)) constitute a tr-type G domain. Residues 19–26 (GHVDHGKT) are G1. GTP is bound at residue 19-26 (GHVDHGKT). Thr26 contributes to the Mg(2+) binding site. The segment at 60–64 (GITIN) is G2. The segment at 81–84 (DCPG) is G3. GTP contacts are provided by residues 81 to 85 (DCPGH) and 136 to 139 (NKVD). Positions 136–139 (NKVD) are G4. The tract at residues 174-176 (SAL) is G5.

This sequence belongs to the TRAFAC class translation factor GTPase superfamily. Classic translation factor GTPase family. EF-Tu/EF-1A subfamily. As to quaternary structure, monomer.

It is found in the cytoplasm. The catalysed reaction is GTP + H2O = GDP + phosphate + H(+). In terms of biological role, GTP hydrolase that promotes the GTP-dependent binding of aminoacyl-tRNA to the A-site of ribosomes during protein biosynthesis. The polypeptide is Elongation factor Tu (Chlamydia pneumoniae (Chlamydophila pneumoniae)).